The chain runs to 94 residues: Viral macrophage inflammatory protein 2 (94 aa).

An N-terminal signal peptide occupies residues 1-20; it reads MDTKGILLVAVLTALLCLQS. Disulfide bonds link Cys-34–Cys-58 and Cys-35–Cys-74.

The protein belongs to the intercrine beta (chemokine CC) family. In terms of assembly, monomer. Interacts with human chemokine receptor CXCR4.

Its subcellular location is the secreted. In terms of biological role, blocks infection by several different human immunodeficiency virus type 1 (HIV-1) strains. This occurs because vMIP-II binds to a wide range of chemokine receptors. May form part of the response to host defenses contributing to virus-induced neoplasia and may have relevance to KSHV and HIV-I interactions. The protein is Viral macrophage inflammatory protein 2 (ORF K4) of Human herpesvirus 8 type P (isolate GK18) (HHV-8).